The following is a 191-amino-acid chain: Calcium-activated potassium channel subunit beta-1 (191 aa).

The Cytoplasmic portion of the chain corresponds to 1–18 (MVKKLVMAQKRGETRALC). A helical transmembrane segment spans residues 19-39 (LGVTMVVCAVITYYILVTTVL). At 40-157 (PLYQKSVWTQ…FQRLYGPQAL (118 aa)) the chain is on the extracellular side. 2 N-linked (GlcNAc...) asparagine glycosylation sites follow: Asn80 and Asn142. The helical transmembrane segment at 158–178 (LFSLFWPTFLLTGGLLIIAMV) threads the bilayer. The Cytoplasmic portion of the chain corresponds to 179-191 (KSNQYLSILAAQK).

This sequence belongs to the KCNMB (TC 8.A.14.1) family. KCNMB1 subfamily. Interacts with KCNMA1 tetramer. There are probably 4 molecules of KCMNB1 per KCNMA1 tetramer. Post-translationally, N-glycosylated. Abundantly expressed in smooth muscle. Low levels of expression in most other tissues. Within the brain, relatively high levels found in hippocampus and corpus callosum.

The protein localises to the membrane. Functionally, regulatory subunit of the calcium activated potassium KCNMA1 (maxiK) channel. Modulates the calcium sensitivity and gating kinetics of KCNMA1, thereby contributing to KCNMA1 channel diversity. Increases the apparent Ca(2+)/voltage sensitivity of the KCNMA1 channel. It also modifies KCNMA1 channel kinetics and alters its pharmacological properties. It slows down the activation and the deactivation kinetics of the channel. Acts as a negative regulator of smooth muscle contraction by enhancing the calcium sensitivity to KCNMA1. Its presence is also a requirement for internal binding of the KCNMA1 channel opener dehydrosoyasaponin I (DHS-1) triterpene glycoside and for external binding of the agonist hormone 17-beta-estradiol (E2). Increases the binding activity of charybdotoxin (CTX) toxin to KCNMA1 peptide blocker by increasing the CTX association rate and decreasing the dissociation rate. The sequence is that of Calcium-activated potassium channel subunit beta-1 (KCNMB1) from Homo sapiens (Human).